We begin with the raw amino-acid sequence, 200 residues long: Cytochrome c biogenesis ATP-binding export protein CcmA (200 aa).

The region spanning leucine 3–alanine 200 is the ABC transporter domain. Position 35-42 (glycine 35–threonine 42) interacts with ATP.

This sequence belongs to the ABC transporter superfamily. CcmA exporter (TC 3.A.1.107) family. As to quaternary structure, the complex is composed of two ATP-binding proteins (CcmA) and two transmembrane proteins (CcmB).

It localises to the cell inner membrane. It catalyses the reaction heme b(in) + ATP + H2O = heme b(out) + ADP + phosphate + H(+). Its function is as follows. Part of the ABC transporter complex CcmAB involved in the biogenesis of c-type cytochromes; once thought to export heme, this seems not to be the case, but its exact role is uncertain. Responsible for energy coupling to the transport system. This chain is Cytochrome c biogenesis ATP-binding export protein CcmA, found in Rhodopseudomonas palustris (strain BisB5).